The primary structure comprises 440 residues: L-gulonolactone oxidase (440 aa).

Residues 17 to 187 (YGCCPEMYFQ…LTVTLQCVPQ (171 aa)) enclose the FAD-binding PCMH-type domain. Pros-8alpha-FAD histidine is present on His-54. The helical transmembrane segment at 253–273 (FYLLEFLLWISTFLPGLVGWI) threads the bilayer.

This sequence belongs to the oxygen-dependent FAD-linked oxidoreductase family. The cofactor is FAD.

Its subcellular location is the microsome membrane. It localises to the endoplasmic reticulum membrane. It carries out the reaction L-gulono-1,4-lactone + O2 = L-ascorbate + H2O2 + H(+). It functions in the pathway cofactor biosynthesis; L-ascorbate biosynthesis via UDP-alpha-D-glucuronate pathway; L-ascorbate from UDP-alpha-D-glucuronate: step 4/4. Functionally, oxidizes L-gulono-1,4-lactone to hydrogen peroxide and L-xylo-hexulonolactone which spontaneously isomerizes to L-ascorbate. The protein is L-gulonolactone oxidase (GULO) of Bos taurus (Bovine).